Reading from the N-terminus, the 211-residue chain is Metalloproteinase inhibitor 3 (211 aa).

The first 23 residues, 1 to 23 (MTPWLGLVVLLGSWSLGDWGAEA), serve as a signal peptide directing secretion. Position 24 (C24) interacts with Zn(2+). Involved in metalloproteinase-binding stretches follow at residues 24–27 (CTCS) and 88–89 (ES). 6 disulfides stabilise this stretch: C24–C91, C26–C118, C36–C143, C145–C192, C150–C155, and C163–C184. The NTR domain maps to 24 to 143 (CTCSPSHPQD…GLNYRYHLGC (120 aa)). Residues 105–188 (TGRVYDGKMY…SKHYACIRQK (84 aa)) are mediates interaction with EFEMP1. N207 is a glycosylation site (N-linked (GlcNAc...) asparagine).

It belongs to the protease inhibitor I35 (TIMP) family. As to quaternary structure, interacts with EFEMP1. Interacts with KDR.

It is found in the secreted. It localises to the extracellular space. The protein resides in the extracellular matrix. Its function is as follows. Mediates a variety of processes including matrix regulation and turnover, inflammation, and angiogenesis, through reversible inhibition of zinc protease superfamily enzymes, primarily matrix metalloproteinases (MMPs). Regulates extracellular matrix (ECM) remodeling through inhibition of matrix metalloproteinases (MMP) including MMP-1, MMP-2, MMP-3, MMP-7, MMP-9, MMP-13, MMP-14 and MMP-15. Additionally, modulates the processing of amyloid precursor protein (APP) and apolipoprotein E receptor ApoER2 by inhibiting two alpha-secretases ADAM10 and ADAM17. Functions as a tumor suppressor and a potent inhibitor of angiogenesis. Exerts its anti-angiogenic effect by directly interacting with vascular endothelial growth factor (VEGF) receptor-2/KDR, preventing its binding to the VEGFA ligand. Selectively induces apoptosis in angiogenic endothelial cells through a caspase-independent cell death pathway. Mechanistically, inhibits matrix-induced focal adhesion kinase PTK2 tyrosine phosphorylation and association with paxillin/PXN and disrupts the incorporation of ITGB3, PTK2 and PXN into focal adhesion contacts on the matrix. This chain is Metalloproteinase inhibitor 3 (TIMP3), found in Bos taurus (Bovine).